Reading from the N-terminus, the 418-residue chain is Tyrosine--tRNA ligase (418 aa).

L-tyrosine is bound at residue Tyr34. The 'HIGH' region signature appears at 39–48 (PTADSLHLGH). Tyr169 and Gln173 together coordinate L-tyrosine. The short motif at 229–233 (KFGKS) is the 'KMSKS' region element. Lys232 contributes to the ATP binding site. The region spanning 352–418 (HNIVEILVAA…GKKKYAVLTY (67 aa)) is the S4 RNA-binding domain.

This sequence belongs to the class-I aminoacyl-tRNA synthetase family. TyrS type 1 subfamily. Homodimer.

The protein resides in the cytoplasm. It catalyses the reaction tRNA(Tyr) + L-tyrosine + ATP = L-tyrosyl-tRNA(Tyr) + AMP + diphosphate + H(+). Functionally, catalyzes the attachment of tyrosine to tRNA(Tyr) in a two-step reaction: tyrosine is first activated by ATP to form Tyr-AMP and then transferred to the acceptor end of tRNA(Tyr). This Streptococcus pyogenes serotype M49 (strain NZ131) protein is Tyrosine--tRNA ligase.